The primary structure comprises 140 residues: uncharacterized protein (140 aa).

An N-acetyltransferase domain is found at 2-140 (KAVIAKNEEQ…GIPHLQMMKD (139 aa)).

The protein belongs to the acetyltransferase family.

This is an uncharacterized protein from Bacillus subtilis (strain 168).